Consider the following 301-residue polypeptide: 3-methyl-2-oxobutanoate hydroxymethyltransferase (301 aa).

A compositionally biased stretch (low complexity) spans 1 to 28; the sequence is MATSNSSDSSMSAEVPAPYGNGPANAPA. A disordered region spans residues 1–37; that stretch reads MATSNSSDSSMSAEVPAPYGNGPANAPATPSDTAKKP. Residues Asp-82 and Asp-121 each contribute to the Mg(2+) site. Residues 82-83, Asp-121, and Lys-151 each bind 3-methyl-2-oxobutanoate; that span reads DS. Position 153 (Glu-153) interacts with Mg(2+). Residue Glu-219 is the Proton acceptor of the active site.

It belongs to the PanB family. As to quaternary structure, homodecamer; pentamer of dimers. It depends on Mg(2+) as a cofactor.

The protein resides in the cytoplasm. It catalyses the reaction 3-methyl-2-oxobutanoate + (6R)-5,10-methylene-5,6,7,8-tetrahydrofolate + H2O = 2-dehydropantoate + (6S)-5,6,7,8-tetrahydrofolate. Its pathway is cofactor biosynthesis; (R)-pantothenate biosynthesis; (R)-pantoate from 3-methyl-2-oxobutanoate: step 1/2. Its function is as follows. Catalyzes the reversible reaction in which hydroxymethyl group from 5,10-methylenetetrahydrofolate is transferred onto alpha-ketoisovalerate to form ketopantoate. The chain is 3-methyl-2-oxobutanoate hydroxymethyltransferase from Arthrobacter sp. (strain FB24).